Consider the following 175-residue polypeptide: MSANHTRMIDLSKFAEAKNAALLTFCSVWMGAIITLLRSPDELPLGFDYAFKASLTVLFIAAIISLKSLMPKFLNQVHKREDEYKNLLYFGDIDQIGTGAYPGMAADLYTPTEGASATPTYLHDLAVQTAIHAKIAHRKFRLFNWAGSLVLFAFGIMMVPPILFCIRWAVNRLHC.

3 helical membrane passes run Ala-17 to Leu-37, Pro-44 to Ile-64, and Ala-146 to Ile-166.

It localises to the cell inner membrane. Functionally, pycsar (pyrimidine cyclase system for antiphage resistance) provides immunity against bacteriophage. The pyrimidine cyclase (PycC) synthesizes cyclic nucleotides in response to infection; these serve as specific second messenger signals. The signals activate the nearby effector, leading to bacterial cell death and abortive phage infection. A clade A Pycsar system. In terms of biological role, the effector gene of a two-gene Pycsar system. Expression of this and uridylate cyclase RsPycC (AC A0A4R2TZQ0) probably confers resistance to bacteriophage. The genes are probably only expressed in response to bacteriophage infection. Probably only responds to cUMP (produced by its cognate NTP cyclase), acts by impairing membrane integrity. The polypeptide is Pycsar effector protein RsPycTM (Rhizobium sp. (strain PP-F2F-G36)).